The following is a 602-amino-acid chain: NAD-reducing hydrogenase HoxS subunit alpha (602 aa).

219–228 is an NAD(+) binding site; the sequence is GRGGAGFSTG. Residue 332–379 participates in FMN binding; sequence GAGAYICGDESALIESCEGKRGTPRVKPPFPVQQGYLGKPTSVNNVET. [4Fe-4S] cluster is bound by residues Cys499, Cys502, Cys505, and Cys545.

The protein belongs to the complex I 51 kDa subunit family. As to quaternary structure, tetramer of an alpha and a gamma subunits (flavin-containing dimer), and a delta and a nickel-containing beta subunit (hydrogenase dimer). Requires FMN as cofactor. [4Fe-4S] cluster serves as cofactor.

Its subcellular location is the cytoplasm. It catalyses the reaction H2 + NAD(+) = NADH + H(+). Subunits alpha and gamma of HoxS constitute an NADH--oxidoreductase. The polypeptide is NAD-reducing hydrogenase HoxS subunit alpha (hoxF) (Cupriavidus necator (strain ATCC 17699 / DSM 428 / KCTC 22496 / NCIMB 10442 / H16 / Stanier 337) (Ralstonia eutropha)).